The following is a 224-amino-acid chain: Triosephosphate isomerase (224 aa).

9 to 11 (NFK) contacts substrate. His93 functions as the Electrophile in the catalytic mechanism. Residue Glu141 is the Proton acceptor of the active site. Substrate is bound by residues Ile146, Gly181, and 202 to 203 (AS).

The protein belongs to the triosephosphate isomerase family. As to quaternary structure, homotetramer; dimer of dimers.

It is found in the cytoplasm. It catalyses the reaction D-glyceraldehyde 3-phosphate = dihydroxyacetone phosphate. Its pathway is carbohydrate biosynthesis; gluconeogenesis. The protein operates within carbohydrate degradation; glycolysis; D-glyceraldehyde 3-phosphate from glycerone phosphate: step 1/1. In terms of biological role, involved in the gluconeogenesis. Catalyzes stereospecifically the conversion of dihydroxyacetone phosphate (DHAP) to D-glyceraldehyde-3-phosphate (G3P). The polypeptide is Triosephosphate isomerase (Pyrobaculum arsenaticum (strain DSM 13514 / JCM 11321 / PZ6)).